A 944-amino-acid polypeptide reads, in one-letter code: Valine--tRNA ligase (944 aa).

Residues 43–53 carry the 'HIGH' region motif; it reads PNVTGTLHMGH. The 'KMSKS' region signature appears at 550 to 554; that stretch reads KMSKS. Residue Lys-553 participates in ATP binding. A coiled-coil region spans residues 878–944; the sequence is LVDMDAERTR…TGLREQRAKL (67 aa).

This sequence belongs to the class-I aminoacyl-tRNA synthetase family. ValS type 1 subfamily. In terms of assembly, monomer.

Its subcellular location is the cytoplasm. It catalyses the reaction tRNA(Val) + L-valine + ATP = L-valyl-tRNA(Val) + AMP + diphosphate. In terms of biological role, catalyzes the attachment of valine to tRNA(Val). As ValRS can inadvertently accommodate and process structurally similar amino acids such as threonine, to avoid such errors, it has a 'posttransfer' editing activity that hydrolyzes mischarged Thr-tRNA(Val) in a tRNA-dependent manner. The sequence is that of Valine--tRNA ligase from Xanthomonas campestris pv. campestris (strain B100).